We begin with the raw amino-acid sequence, 220 residues long: Large ribosomal subunit protein uL6c (220 aa).

The N-terminal 38 residues, 1-38 (MSLPLPSHMKSVFLGMKVEISTSVPVTRIGFWRKSVDC), are a transit peptide targeting the chloroplast.

Component of the chloroplast large ribosomal subunit (LSU). Mature 70S chloroplast ribosomes of higher plants consist of a small (30S) and a large (50S) subunit. The 30S small subunit contains 1 molecule of ribosomal RNA (16S rRNA) and 24 different proteins. The 50S large subunit contains 3 rRNA molecules (23S, 5S and 4.5S rRNA) and 33 different proteins.

The protein localises to the plastid. Its subcellular location is the chloroplast. Its function is as follows. Component of the chloroplast ribosome (chloro-ribosome), a dedicated translation machinery responsible for the synthesis of chloroplast genome-encoded proteins, including proteins of the transcription and translation machinery and components of the photosynthetic apparatus. This chain is Large ribosomal subunit protein uL6c (RPL6), found in Spinacia oleracea (Spinach).